A 312-amino-acid polypeptide reads, in one-letter code: Protein-methionine-sulfoxide reductase catalytic subunit MsrP (312 aa).

The segment at residues 1-42 is a signal peptide (tat-type signal); that stretch reads MALFRYPRPLPSEITPRDMYLSRRSLIGGAAALGAVSATADA. Mo-molybdopterin-binding positions include Asn68, 71–72, Cys126, Ser161, Asn211, Arg216, and 227–229; these read YE and GIK.

The protein belongs to the MsrP family. In terms of assembly, heterodimer of a catalytic subunit (MsrP) and a heme-binding subunit (MsrQ). It depends on Mo-molybdopterin as a cofactor. Post-translationally, predicted to be exported by the Tat system. The position of the signal peptide cleavage has not been experimentally proven.

It localises to the periplasm. The catalysed reaction is L-methionyl-[protein] + a quinone + H2O = L-methionyl-(S)-S-oxide-[protein] + a quinol. The enzyme catalyses L-methionyl-[protein] + a quinone + H2O = L-methionyl-(R)-S-oxide-[protein] + a quinol. Its function is as follows. Part of the MsrPQ system that repairs oxidized periplasmic proteins containing methionine sulfoxide residues (Met-O), using respiratory chain electrons. Thus protects these proteins from oxidative-stress damage caused by reactive species of oxygen and chlorine generated by the host defense mechanisms. MsrPQ is essential for the maintenance of envelope integrity under bleach stress, rescuing a wide series of structurally unrelated periplasmic proteins from methionine oxidation. The catalytic subunit MsrP is non-stereospecific, being able to reduce both (R-) and (S-) diastereoisomers of methionine sulfoxide. This is Protein-methionine-sulfoxide reductase catalytic subunit MsrP from Gluconobacter oxydans (strain 621H) (Gluconobacter suboxydans).